The sequence spans 445 residues: Chromosome partition protein MukF (445 aa).

Residues 213–241 (LSETSNTLKELQDTLQAAGDELQTQILDI) are leucine-zipper.

Belongs to the MukF family. Interacts, and probably forms a ternary complex, with MukE and MukB via its C-terminal region. The complex formation is stimulated by calcium or magnesium. It is required for an interaction between MukE and MukB.

The protein resides in the cytoplasm. The protein localises to the nucleoid. Functionally, involved in chromosome condensation, segregation and cell cycle progression. May participate in facilitating chromosome segregation by condensation DNA from both sides of a centrally located replisome during cell division. Not required for mini-F plasmid partitioning. Probably acts via its interaction with MukB and MukE. Overexpression results in anucleate cells. It has a calcium binding activity. This is Chromosome partition protein MukF from Vibrio vulnificus (strain CMCP6).